A 317-amino-acid chain; its full sequence is Transaldolase (317 aa).

Catalysis depends on Lys-132, which acts as the Schiff-base intermediate with substrate.

This sequence belongs to the transaldolase family. Type 1 subfamily. In terms of assembly, homodimer.

It localises to the cytoplasm. The catalysed reaction is D-sedoheptulose 7-phosphate + D-glyceraldehyde 3-phosphate = D-erythrose 4-phosphate + beta-D-fructose 6-phosphate. The protein operates within carbohydrate degradation; pentose phosphate pathway; D-glyceraldehyde 3-phosphate and beta-D-fructose 6-phosphate from D-ribose 5-phosphate and D-xylulose 5-phosphate (non-oxidative stage): step 2/3. Its function is as follows. Transaldolase is important for the balance of metabolites in the pentose-phosphate pathway. The chain is Transaldolase from Yersinia pseudotuberculosis serotype IB (strain PB1/+).